The following is a 342-amino-acid chain: D-alanine--D-alanine ligase (342 aa).

Positions 132-326 (KLYAKECGIE…VAKHLPKSKN (195 aa)) constitute an ATP-grasp domain. Residue 159–210 (EYPVIIKPNHLGSSIGVSVVYDSSELEYALDVAFEFDDEVLIEPFIEGIEEY) participates in ATP binding. Residues Asp-282, Glu-294, and Asn-296 each coordinate Mg(2+).

Belongs to the D-alanine--D-alanine ligase family. Mg(2+) is required as a cofactor. The cofactor is Mn(2+).

It is found in the cytoplasm. The catalysed reaction is 2 D-alanine + ATP = D-alanyl-D-alanine + ADP + phosphate + H(+). The protein operates within cell wall biogenesis; peptidoglycan biosynthesis. Functionally, cell wall formation. The protein is D-alanine--D-alanine ligase of Nitratiruptor sp. (strain SB155-2).